The primary structure comprises 246 residues: D-erythrulose reductase (246 aa).

13–41 (LVTGAGKGIGRAVAVALCKAGARVTALSR) provides a ligand contact to NADP(+). Ser-138 provides a ligand contact to substrate. Catalysis depends on Tyr-151, which acts as the Proton acceptor. Residue Lys-155 participates in NADP(+) binding.

The protein belongs to the short-chain dehydrogenases/reductases (SDR) family. As to quaternary structure, homotetramer. In terms of processing, the N-terminus is blocked. Highly expressed in kidney, and also found in high amounts in liver and testis. Low expression seen in all other tissues tested.

The protein localises to the cytoplasm. It carries out the reaction D-threitol + NADP(+) = D-erythrulose + NADPH + H(+). The enzyme catalyses xylitol + NADP(+) = L-xylulose + NADPH + H(+). Functionally, catalyzes the reduction of D-erythrulose to D-threitol with the concomitant oxidation of NAD(P)H to NAD(P)(+). NADH is less effective than NADPH. May also catalyze the reduction of L-xylulose. The sequence is that of D-erythrulose reductase (DER) from Gallus gallus (Chicken).